A 287-amino-acid polypeptide reads, in one-letter code: Protoheme IX farnesyltransferase (287 aa).

The next 8 membrane-spanning stretches (helical) occupy residues 9-29 (IVTM…SATL), 31-51 (LIDW…AGAA), 94-114 (IILW…TWLI), 132-152 (VGAI…GGTL), 158-178 (WMLF…IAWL), 202-222 (AWQS…LAWF), 228-248 (VASA…WPLL), and 267-287 (LRWS…RASL).

The protein belongs to the UbiA prenyltransferase family. Protoheme IX farnesyltransferase subfamily.

The protein resides in the cell inner membrane. It carries out the reaction heme b + (2E,6E)-farnesyl diphosphate + H2O = Fe(II)-heme o + diphosphate. Its pathway is porphyrin-containing compound metabolism; heme O biosynthesis; heme O from protoheme: step 1/1. Converts heme B (protoheme IX) to heme O by substitution of the vinyl group on carbon 2 of heme B porphyrin ring with a hydroxyethyl farnesyl side group. The chain is Protoheme IX farnesyltransferase from Rhodopirellula baltica (strain DSM 10527 / NCIMB 13988 / SH1).